The chain runs to 282 residues: Pantothenate synthetase (282 aa).

Residue 30–37 participates in ATP binding; sequence MGFLHDGH. Catalysis depends on histidine 37, which acts as the Proton donor. Glutamine 60 contacts (R)-pantoate. Glutamine 60 provides a ligand contact to beta-alanine. 146–149 is an ATP binding site; the sequence is GQKD. Glutamine 152 provides a ligand contact to (R)-pantoate. ATP-binding positions include isoleucine 175 and 183–186; that span reads KSSR.

Belongs to the pantothenate synthetase family. As to quaternary structure, homodimer.

The protein localises to the cytoplasm. It catalyses the reaction (R)-pantoate + beta-alanine + ATP = (R)-pantothenate + AMP + diphosphate + H(+). It functions in the pathway cofactor biosynthesis; (R)-pantothenate biosynthesis; (R)-pantothenate from (R)-pantoate and beta-alanine: step 1/1. Its function is as follows. Catalyzes the condensation of pantoate with beta-alanine in an ATP-dependent reaction via a pantoyl-adenylate intermediate. This is Pantothenate synthetase from Campylobacter jejuni subsp. doylei (strain ATCC BAA-1458 / RM4099 / 269.97).